A 289-amino-acid chain; its full sequence is UPF0725 protein At1g27860 (289 aa).

The tract at residues 266 to 289 (DQQRSMTLPSGEQAESSKKRPRLS) is disordered. Over residues 268–279 (QRSMTLPSGEQA) the composition is skewed to polar residues.

This sequence belongs to the UPF0725 (EMB2204) family.

The polypeptide is UPF0725 protein At1g27860 (Arabidopsis thaliana (Mouse-ear cress)).